The following is a 249-amino-acid chain: MKHSVSSMNTSLSGKVAAITGAASGIGLECARTLLGAGAKVVLIDREGEKLNKLVAELGENAFALQVDLMQADQVDNLLQGILQLTGRLDIFHANAGAYIGGPVAEGDPDVWDRVLHLNINAAFRCVRSVLPHLIAQKSGDIIFTAVIAGVVPVIWEPVYTASKFAVQAFVHTTRRQVAQYGVRVGAVLPGPVVTALLDDWPKAKMDEALANGSLMQPIEVAESVLFMVTRSKNVTVRDIVILPNSVDL.

An NAD(+)-binding site is contributed by Thr20–Leu43. The Proton acceptor role is filled by Tyr160.

The protein belongs to the short-chain dehydrogenases/reductases (SDR) family. In terms of assembly, homotetramer.

The enzyme catalyses ribitol + NAD(+) = D-ribulose + NADH + H(+). The chain is Ribitol 2-dehydrogenase (rbtD) from Klebsiella aerogenes (Enterobacter aerogenes).